The primary structure comprises 296 residues: Small ribosomal subunit protein uS2 (296 aa).

Disordered stretches follow at residues 1–24 (MNTKKEEVVSSPEATVEKKQTQSQ) and 270–296 (HELKKSEEASEVKAASTKEKLTEEASQ).

Belongs to the universal ribosomal protein uS2 family.

In Mycoplasmopsis synoviae (strain 53) (Mycoplasma synoviae), this protein is Small ribosomal subunit protein uS2.